A 229-amino-acid chain; its full sequence is Cytochrome c oxidase subunit 2 (229 aa).

Over 1 to 26 (MSTWANLGLQDSASPLMEQLIFFHDH) the chain is Mitochondrial intermembrane. The chain crosses the membrane as a helical span at residues 27–48 (ALLILVMITVLVGYLMFMLFFN). Residues 49 to 62 (SYVNRFLLHGQLIE) lie on the Mitochondrial matrix side of the membrane. A helical membrane pass occupies residues 63–82 (MIWTILPAIILLFIAMPSLR). The Mitochondrial intermembrane portion of the chain corresponds to 83–229 (LLYLLDEINE…IKWISSTVNS (147 aa)). 6 residues coordinate Cu cation: H161, C196, E198, C200, H204, and M207. Residue E198 participates in Mg(2+) binding.

The protein belongs to the cytochrome c oxidase subunit 2 family. In terms of assembly, component of the cytochrome c oxidase (complex IV, CIV), a multisubunit enzyme composed of a catalytic core of 3 subunits and several supernumerary subunits. The complex exists as a monomer or a dimer and forms supercomplexes (SCs) in the inner mitochondrial membrane with ubiquinol-cytochrome c oxidoreductase (cytochrome b-c1 complex, complex III, CIII). Cu cation serves as cofactor.

It is found in the mitochondrion inner membrane. The enzyme catalyses 4 Fe(II)-[cytochrome c] + O2 + 8 H(+)(in) = 4 Fe(III)-[cytochrome c] + 2 H2O + 4 H(+)(out). Component of the cytochrome c oxidase, the last enzyme in the mitochondrial electron transport chain which drives oxidative phosphorylation. The respiratory chain contains 3 multisubunit complexes succinate dehydrogenase (complex II, CII), ubiquinol-cytochrome c oxidoreductase (cytochrome b-c1 complex, complex III, CIII) and cytochrome c oxidase (complex IV, CIV), that cooperate to transfer electrons derived from NADH and succinate to molecular oxygen, creating an electrochemical gradient over the inner membrane that drives transmembrane transport and the ATP synthase. Cytochrome c oxidase is the component of the respiratory chain that catalyzes the reduction of oxygen to water. Electrons originating from reduced cytochrome c in the intermembrane space (IMS) are transferred via the dinuclear copper A center (CU(A)) of subunit 2 and heme A of subunit 1 to the active site in subunit 1, a binuclear center (BNC) formed by heme A3 and copper B (CU(B)). The BNC reduces molecular oxygen to 2 water molecules using 4 electrons from cytochrome c in the IMS and 4 protons from the mitochondrial matrix. The polypeptide is Cytochrome c oxidase subunit 2 (mt:CoII) (Drosophila lowei (Fruit fly)).